The following is a 131-amino-acid chain: Serum amyloid A-3 protein (131 aa).

A signal peptide spans 1–18 (MNLSTGIIFCFLILGVSS). Residues 94–105 (MTRDQVREDSKA) show a composition bias toward basic and acidic residues. A disordered region spans residues 94–131 (MTRDQVREDSKADQFANEWGRSGKDPNHFRPAGLPDKY).

It belongs to the SAA family. As to expression, expressed in the liver. Expressed in mammary epithelial cells. Expressed at high levels in mammary ductal cells and vesicle engorged alveoli, but absent from stromal and connective tissue and leukocytes. Secreted into colostrum and mastitic milk (at protein level). Low expression levels, if any, in normal milk (at protein level).

Its subcellular location is the secreted. Functionally, major acute phase reactant. Apolipoprotein of the HDL complex. May have a role in protection of the mammary gland during remodeling and infection. In vitro exhibits antimicrobial activity against Escherichia coli, Streptococcus uberis and Pseudomonas aeruginosa. The polypeptide is Serum amyloid A-3 protein (SAA3) (Bos taurus (Bovine)).